The primary structure comprises 225 residues: UPF0758 protein NMB1038 (225 aa).

An MPN domain is found at 102-224 (VLSDPDTVAD…VCSFRQLGLM (123 aa)). Zn(2+) is bound by residues histidine 173, histidine 175, and aspartate 186. Positions 173–186 (HNHPGGSPEPSQED) match the JAMM motif motif.

The protein belongs to the UPF0758 family.

This Neisseria meningitidis serogroup B (strain ATCC BAA-335 / MC58) protein is UPF0758 protein NMB1038.